The chain runs to 134 residues: Fatty acid-binding protein, muscle (134 aa).

(9Z)-octadecenoate contacts are provided by residues R109 and 129 to 131 (RIY).

Belongs to the calycin superfamily. Fatty-acid binding protein (FABP) family. In terms of assembly, monomer. Adult flight muscle.

Its subcellular location is the cytoplasm. In terms of biological role, binds fatty acids in a 1:1 molar ratio. This chain is Fatty acid-binding protein, muscle, found in Schistocerca gregaria (Desert locust).